A 146-amino-acid polypeptide reads, in one-letter code: uncharacterized protein (146 aa).

A helical membrane pass occupies residues 7–27; the sequence is FVLSITIVLVILIIIAFIWYN.

Belongs to the asfivirus E146L family.

The protein resides in the host membrane. It localises to the virion. This is an uncharacterized protein from Ornithodoros (relapsing fever ticks).